The sequence spans 253 residues: uncharacterized protein (253 aa).

This is an uncharacterized protein from Caenorhabditis elegans.